Here is a 288-residue protein sequence, read N- to C-terminus: N(1)-aminopropylagmatine ureohydrolase (288 aa).

6 residues coordinate Mn(2+): His-114, Asp-133, His-135, Asp-137, Asp-213, and Asp-215.

This sequence belongs to the arginase family. The cofactor is Mn(2+).

The protein localises to the cytoplasm. The enzyme catalyses N(1)-(3-aminopropyl)agmatine + H2O = urea + spermidine. It carries out the reaction agmatine + H2O = urea + putrescine. It functions in the pathway amine and polyamine biosynthesis; spermidine biosynthesis. Involved in the biosynthesis of polyamines which are thought to support the growth of thermophilic microorganisms under high-temperature conditions. It seems that long-chain and branched-chain of polyamines effectively stabilize DNA and RNA, respectively. Catalyzes the decarboxylation of N1-(3-aminopropyl)agmatine to yield spermidine and urea. It can also use agmatine to yield putrescine. The polypeptide is N(1)-aminopropylagmatine ureohydrolase (Thermococcus kodakarensis (strain ATCC BAA-918 / JCM 12380 / KOD1) (Pyrococcus kodakaraensis (strain KOD1))).